A 416-amino-acid chain; its full sequence is Probable glucan 1,3-beta-glucosidase A (416 aa).

The first 22 residues, 1-22 (MIFKFSQKALVALYLVVGLAEA), serve as a signal peptide directing secretion. The active-site Proton donor is Glu211. 2 cysteine pairs are disulfide-bonded: Cys291/Cys415 and Cys316/Cys342. The Nucleophile role is filled by Glu308. A glycan (N-linked (GlcNAc...) asparagine) is linked at Asn344.

Belongs to the glycosyl hydrolase 5 (cellulase A) family. Monomer. Mn(2+) serves as cofactor.

The protein localises to the secreted. The enzyme catalyses Successive hydrolysis of beta-D-glucose units from the non-reducing ends of (1-&gt;3)-beta-D-glucans, releasing alpha-glucose.. Its function is as follows. Beta-glucanases participate in the metabolism of beta-glucan, the main structural component of the cell wall. It could also function biosynthetically as a transglycosylase. This Aspergillus fumigatus (strain ATCC MYA-4609 / CBS 101355 / FGSC A1100 / Af293) (Neosartorya fumigata) protein is Probable glucan 1,3-beta-glucosidase A (exgA).